A 230-amino-acid polypeptide reads, in one-letter code: Transmembrane ascorbate ferrireductase 2 (230 aa).

2 helical membrane-spanning segments follow: residues 5–25 and 50–70; these read VLGG…IAAL and VHPV…MLAY. In terms of domain architecture, Cytochrome b561 spans 14–218; it reads VVRVLGFIIA…LGGFVILGVV (205 aa). Residue H51 coordinates heme b. L-ascorbate contacts are provided by K77 and K81. Residues 82–102 traverse the membrane as a helical segment; it reads LVHLTLQLTAFILSLIGVWAA. H84 is a heme b binding site. 3 residues coordinate monodehydro-L-ascorbate radical: F105, H106, and Y115. H118 provides a ligand contact to heme b. The chain crosses the membrane as a helical span at residues 120-140; the sequence is WLGLACLFLFAFQWAAGFVTY. Residues Y140, R150, and A151 each coordinate L-ascorbate. Residue H157 coordinates heme b. Residues 157–177 traverse the membrane as a helical segment; it reads HVFLGISIYALALVTATTGIL. Positions 182 and 186 each coordinate monodehydro-L-ascorbate radical. The chain crosses the membrane as a helical span at residues 198–218; sequence LVNTMGVLILILGGFVILGVV.

Homodimer. Requires heme b as cofactor. In terms of tissue distribution, expressed in roots, seedlings, leaves and flowers. Expressed in the L1 layer of the shoot apex, in the epidermis of leaf primordia and young leaves and in vascular bundles. In the differentiation zone of the root, detected in the pericycle and in the epidermis, but not in the cortex. Strongly expressed in the cortical region of the root tip, in the meristematic tissue and in the epidermal cell layer of lateral roots, but not in the root caps. Highly expressed in unfertilized ovules. In mature embryos, expressed in the epidermis, cotyledon tips and root tips.

It is found in the membrane. It catalyses the reaction Fe(3+)(out) + L-ascorbate(in) = monodehydro-L-ascorbate radical(in) + Fe(2+)(out) + H(+). Functionally, two-heme-containing cytochrome. Catalyzes ascorbate-dependent transmembrane ferric-chelate reduction. The protein is Transmembrane ascorbate ferrireductase 2 (CYB561B) of Arabidopsis thaliana (Mouse-ear cress).